The chain runs to 485 residues: Forkhead box protein N3 (485 aa).

A disordered region spans residues 1 to 21 (MGPVMPPSKKPESPGISVSSG). Phosphoserine is present on residues Ser83, Ser85, and Ser97. Positions 86–108 (PVQDLDDDTPPSPAHSDMPYDAR) are disordered. The fork-head DNA-binding region spans 114 to 210 (KPPYSFSCLI…QALKKTPYHS (97 aa)). A disordered region spans residues 315–454 (RTESEPSCGS…DEEMKEAAGS (140 aa)). A compositionally biased stretch (low complexity) spans 338 to 359 (SSAKSSHARSTSPASDCVSSSS). Basic and acidic residues predominate over residues 382 to 404 (HESHSETEEDDRKCSPKEAKDAL). Basic residues predominate over residues 412-424 (QHKKRQHFAKARK). Ser443 bears the Phosphoserine mark.

Interacts through its C-terminus with the C-terminus of SNW1/SKIP.

It is found in the nucleus. Acts as a transcriptional repressor. May be involved in DNA damage-inducible cell cycle arrests (checkpoints). This Sus scrofa (Pig) protein is Forkhead box protein N3 (FOXN3).